A 76-amino-acid polypeptide reads, in one-letter code: Small ribosomal subunit protein uS17 (76 aa).

Belongs to the universal ribosomal protein uS17 family. In terms of assembly, part of the 30S ribosomal subunit.

Its function is as follows. One of the primary rRNA binding proteins, it binds specifically to the 5'-end of 16S ribosomal RNA. The chain is Small ribosomal subunit protein uS17 from Ruegeria sp. (strain TM1040) (Silicibacter sp.).